Consider the following 89-residue polypeptide: Small ribosomal subunit protein uS15 (89 aa).

The protein belongs to the universal ribosomal protein uS15 family. As to quaternary structure, part of the 30S ribosomal subunit. Forms a bridge to the 50S subunit in the 70S ribosome, contacting the 23S rRNA.

In terms of biological role, one of the primary rRNA binding proteins, it binds directly to 16S rRNA where it helps nucleate assembly of the platform of the 30S subunit by binding and bridging several RNA helices of the 16S rRNA. Its function is as follows. Forms an intersubunit bridge (bridge B4) with the 23S rRNA of the 50S subunit in the ribosome. This chain is Small ribosomal subunit protein uS15, found in Corynebacterium efficiens (strain DSM 44549 / YS-314 / AJ 12310 / JCM 11189 / NBRC 100395).